Here is a 418-residue protein sequence, read N- to C-terminus: 3-isopropylmalate dehydratase large subunit 1 (418 aa).

[4Fe-4S] cluster is bound by residues C298, C358, and C361.

It belongs to the aconitase/IPM isomerase family. LeuC type 2 subfamily. In terms of assembly, heterodimer of LeuC and LeuD. Requires [4Fe-4S] cluster as cofactor.

The enzyme catalyses (2R,3S)-3-isopropylmalate = (2S)-2-isopropylmalate. It functions in the pathway amino-acid biosynthesis; L-leucine biosynthesis; L-leucine from 3-methyl-2-oxobutanoate: step 2/4. Catalyzes the isomerization between 2-isopropylmalate and 3-isopropylmalate, via the formation of 2-isopropylmaleate. The sequence is that of 3-isopropylmalate dehydratase large subunit 1 from Methanopyrus kandleri (strain AV19 / DSM 6324 / JCM 9639 / NBRC 100938).